The sequence spans 443 residues: Glutamyl-tRNA reductase (443 aa).

Substrate is bound by residues 49–52 (TCNR), Ser-109, 114–116 (ETQ), and Gln-120. Cys-50 (nucleophile) is an active-site residue. 189-194 (GAGDMS) contributes to the NADP(+) binding site.

This sequence belongs to the glutamyl-tRNA reductase family. As to quaternary structure, homodimer.

The catalysed reaction is (S)-4-amino-5-oxopentanoate + tRNA(Glu) + NADP(+) = L-glutamyl-tRNA(Glu) + NADPH + H(+). The protein operates within porphyrin-containing compound metabolism; protoporphyrin-IX biosynthesis; 5-aminolevulinate from L-glutamyl-tRNA(Glu): step 1/2. In terms of biological role, catalyzes the NADPH-dependent reduction of glutamyl-tRNA(Glu) to glutamate 1-semialdehyde (GSA). In Staphylococcus saprophyticus subsp. saprophyticus (strain ATCC 15305 / DSM 20229 / NCIMB 8711 / NCTC 7292 / S-41), this protein is Glutamyl-tRNA reductase.